We begin with the raw amino-acid sequence, 219 residues long: MPAKKRTRKTVKKTVSFSDDTTLTTHQNREKKNVDHDRPPVYVRKTPLMTFPYHLVALLYYYVFVSSNFNTVKLLSFLIPTQVAYLVLQFNKCTVYGNKIIKINYSLTIICLGVTFLLSFPTMLLTILFGAPLMDLLWETWLLSLHFAFLAYPAVYSVFNCDFKVGLWKKYFIFIVVGGWISCVVIPLDWDRDWQNWPIPIVVGGYLGALVGYTIGAYI.

At 1–45 the chain is on the cytoplasmic side; it reads MPAKKRTRKTVKKTVSFSDDTTLTTHQNREKKNVDHDRPPVYVRK. A Phosphoserine modification is found at S16. The helical transmembrane segment at 46-66 threads the bilayer; the sequence is TPLMTFPYHLVALLYYYVFVS. Position 67 (S67) is a topological domain, lumenal. Residues 68–88 form a helical membrane-spanning segment; it reads NFNTVKLLSFLIPTQVAYLVL. Residues 89 to 108 are Cytoplasmic-facing; sequence QFNKCTVYGNKIIKINYSLT. The chain crosses the membrane as a helical span at residues 109 to 129; it reads IICLGVTFLLSFPTMLLTILF. The Lumenal portion of the chain corresponds to 130–135; it reads GAPLMD. Residues 136-156 traverse the membrane as a helical segment; that stretch reads LLWETWLLSLHFAFLAYPAVY. Over 157–170 the chain is Cytoplasmic; the sequence is SVFNCDFKVGLWKK. A helical transmembrane segment spans residues 171–191; sequence YFIFIVVGGWISCVVIPLDWD. At 192–198 the chain is on the lumenal side; it reads RDWQNWP. Residues 199 to 217 form a helical membrane-spanning segment; the sequence is IPIVVGGYLGALVGYTIGA. The Cytoplasmic segment spans residues 218-219; sequence YI.

This sequence belongs to the PIGF family.

The protein resides in the endoplasmic reticulum membrane. It functions in the pathway glycolipid biosynthesis; glycosylphosphatidylinositol-anchor biosynthesis. Functionally, acts in the GPI biosynthetic pathway between GlcNAc-PI synthesis and GPI transfer to protein. Required for the formation of complete GPI precursors CP1 and CP2. The sequence is that of Glycosylphosphatidylinositol anchor biosynthesis protein 11 (GPI11) from Saccharomyces cerevisiae (strain ATCC 204508 / S288c) (Baker's yeast).